Consider the following 1207-residue polypeptide: DNA-directed RNA polymerase subunit beta' (1207 aa).

Zn(2+) is bound by residues Cys-60, Cys-62, Cys-75, and Cys-78. Mg(2+) is bound by residues Asp-449, Asp-451, and Asp-453. 4 residues coordinate Zn(2+): Cys-822, Cys-896, Cys-903, and Cys-906.

It belongs to the RNA polymerase beta' chain family. In terms of assembly, the RNAP catalytic core consists of 2 alpha, 1 beta, 1 beta' and 1 omega subunit. When a sigma factor is associated with the core the holoenzyme is formed, which can initiate transcription. Mg(2+) is required as a cofactor. Requires Zn(2+) as cofactor.

The catalysed reaction is RNA(n) + a ribonucleoside 5'-triphosphate = RNA(n+1) + diphosphate. Functionally, DNA-dependent RNA polymerase catalyzes the transcription of DNA into RNA using the four ribonucleoside triphosphates as substrates. In Staphylococcus saprophyticus subsp. saprophyticus (strain ATCC 15305 / DSM 20229 / NCIMB 8711 / NCTC 7292 / S-41), this protein is DNA-directed RNA polymerase subunit beta'.